The following is a 214-amino-acid chain: Elongation factor Ts (214 aa).

Positions 80 to 83 (TDFV) are involved in Mg(2+) ion dislocation from EF-Tu.

It belongs to the EF-Ts family.

Its subcellular location is the cytoplasm. In terms of biological role, associates with the EF-Tu.GDP complex and induces the exchange of GDP to GTP. It remains bound to the aminoacyl-tRNA.EF-Tu.GTP complex up to the GTP hydrolysis stage on the ribosome. The protein is Elongation factor Ts of Syntrophomonas wolfei subsp. wolfei (strain DSM 2245B / Goettingen).